Reading from the N-terminus, the 123-residue chain is Ribonuclease P protein component 2 (123 aa).

This sequence belongs to the eukaryotic/archaeal RNase P protein component 2 family. Consists of a catalytic RNA component and at least 4-5 protein subunits.

The protein resides in the cytoplasm. It catalyses the reaction Endonucleolytic cleavage of RNA, removing 5'-extranucleotides from tRNA precursor.. Part of ribonuclease P, a protein complex that generates mature tRNA molecules by cleaving their 5'-ends. The chain is Ribonuclease P protein component 2 from Sulfurisphaera tokodaii (strain DSM 16993 / JCM 10545 / NBRC 100140 / 7) (Sulfolobus tokodaii).